The primary structure comprises 473 residues: UDP-N-acetylmuramate--L-alanine ligase (473 aa).

Residue 122 to 128 coordinates ATP; sequence GTHGKTT.

It belongs to the MurCDEF family.

Its subcellular location is the cytoplasm. It catalyses the reaction UDP-N-acetyl-alpha-D-muramate + L-alanine + ATP = UDP-N-acetyl-alpha-D-muramoyl-L-alanine + ADP + phosphate + H(+). It participates in cell wall biogenesis; peptidoglycan biosynthesis. Functionally, cell wall formation. In Teredinibacter turnerae (strain ATCC 39867 / T7901), this protein is UDP-N-acetylmuramate--L-alanine ligase.